The chain runs to 156 residues: Small ribosomal subunit protein uS7 (156 aa).

In terms of assembly, part of the 30S ribosomal subunit. Contacts proteins S9 and S11.

Its function is as follows. One of the primary rRNA binding proteins, it binds directly to 16S rRNA where it nucleates assembly of the head domain of the 30S subunit. Is located at the subunit interface close to the decoding center, probably blocks exit of the E-site tRNA. The polypeptide is Small ribosomal subunit protein uS7 (Rhodopseudomonas palustris (strain ATCC BAA-98 / CGA009)).